We begin with the raw amino-acid sequence, 31 residues long: Photosystem I reaction center subunit XII (31 aa).

Residues threonine 6 to leucine 25 form a helical membrane-spanning segment.

This sequence belongs to the PsaM family.

The protein localises to the cellular thylakoid membrane. The polypeptide is Photosystem I reaction center subunit XII (Synechocystis sp. (strain ATCC 27184 / PCC 6803 / Kazusa)).